Reading from the N-terminus, the 358-residue chain is Membrane-bound lytic murein transglycosylase C (358 aa).

Residues 1 to 16 form the signal peptide; sequence MKKILALLVIAPLLVS. The N-palmitoyl cysteine moiety is linked to residue cysteine 17. Cysteine 17 carries the S-diacylglycerol cysteine lipid modification.

This sequence belongs to the transglycosylase Slt family.

The protein localises to the cell outer membrane. The catalysed reaction is Exolytic cleavage of the (1-&gt;4)-beta-glycosidic linkage between N-acetylmuramic acid (MurNAc) and N-acetylglucosamine (GlcNAc) residues in peptidoglycan, from either the reducing or the non-reducing ends of the peptidoglycan chains, with concomitant formation of a 1,6-anhydrobond in the MurNAc residue.. Its function is as follows. Murein-degrading enzyme. May play a role in recycling of muropeptides during cell elongation and/or cell division. The polypeptide is Membrane-bound lytic murein transglycosylase C (Yersinia pseudotuberculosis serotype O:1b (strain IP 31758)).